The primary structure comprises 186 residues: MLIGYVRVSTNEQNTALQRNALESAGCELIFEDKASGKQTERPGLKKVLRMLSRGDTLVVWKLDRLGRSMRHLVVLVEELRDRGINFRSLTDSIDTSTPMGRFFFHVMGALAEMERELIVERTRAGLDAARAEGRIGGRRPKYQEETWQQMRRLLENGIPRKQVAIIYDVAVSTLYKKFPASSFQS.

The Resolvase/invertase-type recombinase catalytic domain maps to 1-134; that stretch reads MLIGYVRVST…AGLDAARAEG (134 aa). S9 (O-(5'-phospho-DNA)-serine intermediate) is an active-site residue. Residues 161-180 constitute a DNA-binding region (H-T-H motif); that stretch reads RKQVAIIYDVAVSTLYKKFP.

The protein belongs to the site-specific recombinase resolvase family.

Functionally, performs inversion of a viral 3 kp segment (C-segment) that encodes two alternate pairs of tail fiber proteins thereby modifying the host specificity of the virus. The chain is DNA-invertase (cin) from Enterobacteria phage P7 (Bacteriophage P7).